Reading from the N-terminus, the 124-residue chain is Large ribosomal subunit protein bL12 (124 aa).

It belongs to the bacterial ribosomal protein bL12 family. As to quaternary structure, homodimer. Part of the ribosomal stalk of the 50S ribosomal subunit. Forms a multimeric L10(L12)X complex, where L10 forms an elongated spine to which 2 to 4 L12 dimers bind in a sequential fashion. Binds GTP-bound translation factors.

Functionally, forms part of the ribosomal stalk which helps the ribosome interact with GTP-bound translation factors. Is thus essential for accurate translation. This is Large ribosomal subunit protein bL12 from Dehalococcoides mccartyi (strain ATCC BAA-2266 / KCTC 15142 / 195) (Dehalococcoides ethenogenes (strain 195)).